Reading from the N-terminus, the 452-residue chain is Protein MLF3 (452 aa).

6 positions are modified to phosphoserine: S8, S11, S14, S56, S74, and S79. The interval 61–94 (SGSEVRTPSLRKNSNNVSSPLDNVIPTSRSASNS) is disordered. Residues 64–81 (EVRTPSLRKNSNNVSSPL) are compositionally biased toward polar residues. T121 bears the Phosphothreonine mark. Phosphoserine occurs at positions 145, 156, and 160. T169 is subject to Phosphothreonine. The residue at position 171 (S171) is a Phosphoserine. Residues 171–182 (SATLPSSESSPA) are compositionally biased toward polar residues. Residues 171–220 (SATLPSSESSPASPDLKLSRSHSHSAATRPTLNNINNTGMTTTTSNGEPN) form a disordered region. At T173 the chain carries Phosphothreonine. Phosphoserine occurs at positions 183 and 189. A compositionally biased stretch (low complexity) spans 201-216 (TLNNINNTGMTTTTSN). Y227 bears the Phosphotyrosine mark. Residues S228, S257, and S265 each carry the phosphoserine modification. Disordered stretches follow at residues 290 to 321 (PATSPYVSPQQSARQYSNNANNNAKSPKNRSS) and 348 to 402 (IESS…AIGK). Y295 carries the post-translational modification Phosphotyrosine. 3 positions are modified to phosphoserine: S297, S320, and S353. Positions 299 to 321 (QQSARQYSNNANNNAKSPKNRSS) are enriched in low complexity. Low complexity predominate over residues 365-383 (PSFPLSSSLRSSANLASNP). Over residues 384–398 (ELATQTPLSTSSSYT) the composition is skewed to polar residues. S439 is modified (phosphoserine).

To yeast VHS2.

The protein localises to the cytoplasm. The protein is Protein MLF3 (MLF3) of Saccharomyces cerevisiae (strain ATCC 204508 / S288c) (Baker's yeast).